The sequence spans 566 residues: Glutamate--tRNA ligase (566 aa).

A 'HIGH' region motif is present at residues 93–103 (PNPDYTIHLGN).

Belongs to the class-I aminoacyl-tRNA synthetase family. Glutamate--tRNA ligase type 2 subfamily.

The protein resides in the cytoplasm. The enzyme catalyses tRNA(Glu) + L-glutamate + ATP = L-glutamyl-tRNA(Glu) + AMP + diphosphate. Functionally, catalyzes the attachment of glutamate to tRNA(Glu) in a two-step reaction: glutamate is first activated by ATP to form Glu-AMP and then transferred to the acceptor end of tRNA(Glu). This Staphylothermus marinus (strain ATCC 43588 / DSM 3639 / JCM 9404 / F1) protein is Glutamate--tRNA ligase.